The primary structure comprises 453 residues: Probable glucan endo-1,3-beta-glucosidase eglC (453 aa).

Positions 1–18 are cleaved as a signal peptide; it reads MQTRQLLALALAVAATEA. The Proton donor role is filled by Glu128. A glycan (N-linked (GlcNAc...) asparagine) is linked at Asn183. Catalysis depends on Glu239, which acts as the Nucleophile. 3 N-linked (GlcNAc...) asparagine glycosylation sites follow: Asn364, Asn368, and Asn376. Residues 370–380 are compositionally biased toward polar residues; it reads TYPGSWNSTRP. Residues 370–423 form a disordered region; sequence TYPGSWNSTRPGANGGSSGSSGSSGSSGSSGSSGSSGSGASGHSSSTGSSSFPS. Composition is skewed to low complexity over residues 389–402 and 410–423; these read SSGS…SGSS and SGHS…SFPS. A lipid anchor (GPI-anchor amidated asparagine) is attached at Asn430. Residues 431-453 constitute a propeptide, removed in mature form; that stretch reads SASGLSGSLFGAVAAVFVALAAL.

Belongs to the glycosyl hydrolase 17 family. In terms of processing, the GPI-anchor is attached to the protein in the endoplasmic reticulum and serves to target the protein to the cell surface. There, the glucosamine-inositol phospholipid moiety is cleaved off and the GPI-modified mannoprotein is covalently attached via its lipidless GPI glycan remnant to the 1,6-beta-glucan of the outer cell wall layer.

Its subcellular location is the cell membrane. It is found in the secreted. The protein resides in the cell wall. It carries out the reaction Hydrolysis of (1-&gt;3)-beta-D-glucosidic linkages in (1-&gt;3)-beta-D-glucans.. Glucanases play a role in cell expansion during growth, in cell-cell fusion during mating, and in spore release during sporulation. This enzyme may be involved in beta-glucan degradation and also function biosynthetically as a transglycosylase. This is Probable glucan endo-1,3-beta-glucosidase eglC (eglC) from Aspergillus clavatus (strain ATCC 1007 / CBS 513.65 / DSM 816 / NCTC 3887 / NRRL 1 / QM 1276 / 107).